A 92-amino-acid chain; its full sequence is MISPNRQGIVVWLTSLKYARQLRRFGHVQYVSKKMKYVVFYCDQSKVPELVDKLSSFHFVTDVKPSMRPFINTEYEGAKPDKAKEYDYKLGI.

The protein belongs to the UPF0298 family.

Its subcellular location is the cytoplasm. The protein is UPF0298 protein ABC2380 of Shouchella clausii (strain KSM-K16) (Alkalihalobacillus clausii).